The following is a 70-amino-acid chain: DNA gyrase inhibitor YacG (70 aa).

Residues cysteine 20, cysteine 23, cysteine 35, and cysteine 39 each contribute to the Zn(2+) site.

It belongs to the DNA gyrase inhibitor YacG family. Interacts with GyrB. It depends on Zn(2+) as a cofactor.

Its function is as follows. Inhibits all the catalytic activities of DNA gyrase by preventing its interaction with DNA. Acts by binding directly to the C-terminal domain of GyrB, which probably disrupts DNA binding by the gyrase. This Rhizobium etli (strain CIAT 652) protein is DNA gyrase inhibitor YacG.